A 459-amino-acid chain; its full sequence is ATP synthase subunit beta (459 aa).

Position 148–155 (148–155 (GGAGVGKT)) interacts with ATP.

Belongs to the ATPase alpha/beta chains family. F-type ATPases have 2 components, CF(1) - the catalytic core - and CF(0) - the membrane proton channel. CF(1) has five subunits: alpha(3), beta(3), gamma(1), delta(1), epsilon(1). CF(0) has three main subunits: a(1), b(2) and c(9-12). The alpha and beta chains form an alternating ring which encloses part of the gamma chain. CF(1) is attached to CF(0) by a central stalk formed by the gamma and epsilon chains, while a peripheral stalk is formed by the delta and b chains.

Its subcellular location is the cell inner membrane. The catalysed reaction is ATP + H2O + 4 H(+)(in) = ADP + phosphate + 5 H(+)(out). Its function is as follows. Produces ATP from ADP in the presence of a proton gradient across the membrane. The catalytic sites are hosted primarily by the beta subunits. In Ruthia magnifica subsp. Calyptogena magnifica, this protein is ATP synthase subunit beta.